We begin with the raw amino-acid sequence, 250 residues long: Ubiquinone/menaquinone biosynthesis C-methyltransferase UbiE (250 aa).

S-adenosyl-L-methionine contacts are provided by residues threonine 73, aspartate 94, and 122-123 (DA).

It belongs to the class I-like SAM-binding methyltransferase superfamily. MenG/UbiE family.

The enzyme catalyses a 2-demethylmenaquinol + S-adenosyl-L-methionine = a menaquinol + S-adenosyl-L-homocysteine + H(+). The catalysed reaction is a 2-methoxy-6-(all-trans-polyprenyl)benzene-1,4-diol + S-adenosyl-L-methionine = a 5-methoxy-2-methyl-3-(all-trans-polyprenyl)benzene-1,4-diol + S-adenosyl-L-homocysteine + H(+). It participates in quinol/quinone metabolism; menaquinone biosynthesis; menaquinol from 1,4-dihydroxy-2-naphthoate: step 2/2. The protein operates within cofactor biosynthesis; ubiquinone biosynthesis. Methyltransferase required for the conversion of demethylmenaquinol (DMKH2) to menaquinol (MKH2) and the conversion of 2-polyprenyl-6-methoxy-1,4-benzoquinol (DDMQH2) to 2-polyprenyl-3-methyl-6-methoxy-1,4-benzoquinol (DMQH2). This chain is Ubiquinone/menaquinone biosynthesis C-methyltransferase UbiE, found in Coxiella burnetii (strain RSA 331 / Henzerling II).